The following is a 668-amino-acid chain: MDLRQREHIETVVQATTYLAPPAVLADRIAHDAIIQNSWRRCVHQYGLDPSRMQEARILPQPRLREHQERIDDFARIARHGLQSLYGQVAGLGYVVLLTDAQGVTVDYIGEARSDAALRHAGLYLGAEWSESGAGTCAVGTALATGQALTVHQADHFDATHIPLTCTAAPLFDTHGNLHAILDISALTSPQAKDSQGLALQMVRIYAAHIENANFLRAHRRDWILKLNVAPEFVDVNPEYLLALDEAGRIVGHNHRARLMLEGELGGAPGATVLGQRFETLFDARLEDLGHYVYSRPSEQRLVALTRSGGLLYLSVLPPALRWQAPPAETQVAMPDALAALTGGDAALQLQLQRAARLVDSPINLLIHGETGSGKEFLAKALHLASARRGGPFVAVNCAAIPETLIESELFGHLPNSFSGAGPRGKRGLIQEADGGTLFLDEIGDMPRELQSRLLRVLAEGEVLPVGAARPVPVRLRVISATHHSLEQLVADGRFREDLYYRLNGARFTLPPLRARTDLDWLVRKLLQEGSAEGSEITLSPAARERLHRHRWPGNLRELRNVLEYARAVCADGYIDVPDLPDSLAGPAPSAALPQPGPAQSPAAAPFDPHQLPPEGMLLMQYLRASGWNLSAVARQIGVSRMTLYRRMERYGIQSPNRRDGGPEPTDA.

Residues 341 to 570 (LTGGDAALQL…NVLEYARAVC (230 aa)) form the Sigma-54 factor interaction domain. ATP is bound by residues 369–376 (GETGSGKE) and 433–442 (ADGGTLFLDE). Low complexity predominate over residues 586-606 (GPAPSAALPQPGPAQSPAAAP). The interval 586 to 611 (GPAPSAALPQPGPAQSPAAAPFDPHQ) is disordered. Residues 630–649 (LSAVARQIGVSRMTLYRRME) constitute a DNA-binding region (H-T-H motif).

Required for sigma-54-dependent transcription of acoXABC. The protein is Acetoin catabolism regulatory protein (acoR) of Cupriavidus necator (strain ATCC 17699 / DSM 428 / KCTC 22496 / NCIMB 10442 / H16 / Stanier 337) (Ralstonia eutropha).